Reading from the N-terminus, the 181-residue chain is Large ribosomal subunit protein uL6m (181 aa).

It belongs to the universal ribosomal protein uL6 family.

It localises to the mitochondrion. In Acanthamoeba castellanii (Amoeba), this protein is Large ribosomal subunit protein uL6m (RPL6).